The sequence spans 296 residues: Ribosomal RNA small subunit methyltransferase A (296 aa).

Residues Asn31, Leu33, Gly58, Glu79, Asp104, and Asn129 each contribute to the S-adenosyl-L-methionine site.

This sequence belongs to the class I-like SAM-binding methyltransferase superfamily. rRNA adenine N(6)-methyltransferase family. RsmA subfamily.

It localises to the cytoplasm. It carries out the reaction adenosine(1518)/adenosine(1519) in 16S rRNA + 4 S-adenosyl-L-methionine = N(6)-dimethyladenosine(1518)/N(6)-dimethyladenosine(1519) in 16S rRNA + 4 S-adenosyl-L-homocysteine + 4 H(+). In terms of biological role, specifically dimethylates two adjacent adenosines (A1518 and A1519) in the loop of a conserved hairpin near the 3'-end of 16S rRNA in the 30S particle. May play a critical role in biogenesis of 30S subunits. In Shouchella clausii (strain KSM-K16) (Alkalihalobacillus clausii), this protein is Ribosomal RNA small subunit methyltransferase A.